Here is a 305-residue protein sequence, read N- to C-terminus: Elongation factor Ts (305 aa).

The tract at residues 81 to 84 (TDFV) is involved in Mg(2+) ion dislocation from EF-Tu.

The protein belongs to the EF-Ts family.

It is found in the cytoplasm. In terms of biological role, associates with the EF-Tu.GDP complex and induces the exchange of GDP to GTP. It remains bound to the aminoacyl-tRNA.EF-Tu.GTP complex up to the GTP hydrolysis stage on the ribosome. The sequence is that of Elongation factor Ts from Nitratiruptor sp. (strain SB155-2).